The chain runs to 154 residues: Cathelicidin-2 (154 aa).

Positions 1 to 17 (MLSCWVLLLALLGGVCA) are cleaved as a signal peptide. A propeptide spanning residues 18–122 (LPAPLSYPQA…RCRDASSDPV (105 aa)) is cleaved from the precursor. 2 cysteine pairs are disulfide-bonded: C75-C86 and C97-C114.

Belongs to the cathelicidin family. In terms of tissue distribution, detected in trachea, lung, proventriculus, duodenum, jejunum, ileum, caeca, colon, caecal tonsil, bursa of Fabricius, kidney, ovary, testis, thymus, liver, spleen, bone marrow, skin, uropygial gland, muscle and brain.

The protein resides in the secreted. Its function is as follows. Binds bacterial lipopolysaccharide (LPS). Has potent antimicrobial activity against Gram-positive and Gram-negative bacteria (in vitro). Has hemolytic activity (in vitro). May play a role in the innate immune response. The chain is Cathelicidin-2 (CATHL2) from Gallus gallus (Chicken).